The following is a 413-amino-acid chain: MSTRSQSESPVDAPQQGATNGQSASDIHHSGDELLLSADSDIAPTLSVVMPTLNEEGGIAQCIEWVKAALEDMQIYGEVVVADSSTDRTPEIAAENGAIVIEPDGKGYGYAYLYAFERVRGDYIAMGDADCTYDFEELPKLLNMVRSGDADMAMGSRLEGEILPGSMPPLHEHVGNPLLTKFLNVFYGAGVSDAHSGMRVFSRDAWETMDCSSTGMEFASEMIMEAGAKDLEIKEKPITYHPREGEANLESFPDGWRHVRFMLVNAPGYLFSAPGFGLSVIGVLALVLAWSGVEVGGAQFGIHTGIGGGLLTLAGFQLMLFGAFSTVSSDPVRGASDPFTTWFTERISLERGATIGSVVLLCGLAYGGLLAFTWVTSGFSALPIAVADVVATVAVVIGLQMVFGSFLLGSLGE.

Positions 1–27 (MSTRSQSESPVDAPQQGATNGQSASDI) are disordered. The span at 16–25 (QGATNGQSAS) shows a compositional bias: polar residues. The next 4 helical transmembrane spans lie at 270–290 (LFSA…VLAW), 304–324 (TGIG…FGAF), 355–375 (IGSV…FTWV), and 389–409 (VVAT…FLLG).

It belongs to the glycosyltransferase 2 family.

The protein resides in the membrane. It functions in the pathway protein modification; protein glycosylation. The protein operates within cell surface structure biogenesis; S-layer biogenesis. In terms of biological role, hexosyltransferase involved in N-glycan biosynthetic pathway that takes place under low-salt conditions (1.75 M instead of 3.4 M). Participates in the formation of the tetrasaccharide present at 'Asn-532' of S-layer glycoprotein Csg, consisting of a sulfated hexose, 2 hexoses and rhamnose. Together with Agl5, mediates the addition of sugars 1 and 2 to dolichol phosphate in the tetrasaccharide. The sequence is that of Low-salt glycan biosynthesis hexosyltransferase Agl6 (agl6) from Haloferax volcanii (strain ATCC 29605 / DSM 3757 / JCM 8879 / NBRC 14742 / NCIMB 2012 / VKM B-1768 / DS2) (Halobacterium volcanii).